Consider the following 437-residue polypeptide: MRIALINSQQDVGGVNIKNHLQTLLAAGGRWPLAEQHELTFYEVAGRLIHQDRIDEEVDADLILFISRHASVHPTPALTVHVTGNYEGADLGGEPGRLAPAAPAWMHAILGNLAARAPEGYRVSYEVTHHGPTALSTPSLFVEIGSTATEWADPAAGRAVAESILAAEPQETIDLLGFGGTHYAVRQTEIALSSRGAFGHMVPTRQIGAVDPVLLRTMQEASGAVAGYIDRKSLTKDDAGRIERMLGDAALPLLSESEIQEASGLAWAAYLRVRELAEEIAPGSRVRIHDLRGEGTPAVVRIGPGLIEETIKSDRSGFLKGLDELPVAHLSKGSNEVLSTFICFENESSRLASDITTLCVKLLLICENAVIDGDHLVLRKVRFDPEKARRHGIPKGPLFAMLAGGKAVEIEGRMVTPDAVQTTSVKRIHIPGLERYI.

This sequence belongs to the DtdA deacylase family. As to quaternary structure, monomer. Zn(2+) serves as cofactor.

The enzyme catalyses a D-aminoacyl-tRNA + H2O = a tRNA + a D-alpha-amino acid + H(+). It carries out the reaction glycyl-tRNA(Ala) + H2O = tRNA(Ala) + glycine + H(+). D-aminoacyl-tRNA deacylase with broad substrate specificity. By recycling D-aminoacyl-tRNA to D-amino acids and free tRNA molecules, this enzyme counteracts the toxicity associated with the formation of D-aminoacyl-tRNA entities in vivo. In Methanoculleus marisnigri (strain ATCC 35101 / DSM 1498 / JR1), this protein is D-aminoacyl-tRNA deacylase.